Here is a 355-residue protein sequence, read N- to C-terminus: Phospho-N-acetylmuramoyl-pentapeptide-transferase (355 aa).

The next 10 helical transmembrane spans lie at 3-23, 56-76, 80-100, 120-140, 152-172, 185-205, 224-244, 251-271, 276-296, and 330-350; these read GVLI…PWVI, VIIV…GIGF, GLLV…DDYI, AAVA…AGLL, TSLT…IAAT, LAAG…FWQF, PLDV…FLWW, IFMG…IAIV, LLLV…MIQV, and FWIV…AEFL.

This sequence belongs to the glycosyltransferase 4 family. MraY subfamily. It depends on Mg(2+) as a cofactor.

The protein localises to the cell membrane. It catalyses the reaction UDP-N-acetyl-alpha-D-muramoyl-L-alanyl-gamma-D-glutamyl-meso-2,6-diaminopimeloyl-D-alanyl-D-alanine + di-trans,octa-cis-undecaprenyl phosphate = di-trans,octa-cis-undecaprenyl diphospho-N-acetyl-alpha-D-muramoyl-L-alanyl-D-glutamyl-meso-2,6-diaminopimeloyl-D-alanyl-D-alanine + UMP. The protein operates within cell wall biogenesis; peptidoglycan biosynthesis. Catalyzes the initial step of the lipid cycle reactions in the biosynthesis of the cell wall peptidoglycan: transfers peptidoglycan precursor phospho-MurNAc-pentapeptide from UDP-MurNAc-pentapeptide onto the lipid carrier undecaprenyl phosphate, yielding undecaprenyl-pyrophosphoryl-MurNAc-pentapeptide, known as lipid I. This is Phospho-N-acetylmuramoyl-pentapeptide-transferase from Frankia alni (strain DSM 45986 / CECT 9034 / ACN14a).